A 1801-amino-acid polypeptide reads, in one-letter code: U3 small nucleolar RNA-associated protein 10 (1801 aa).

2 consecutive transmembrane segments (helical) span residues 102 to 122 (LALVGGRLLLSPAVKAVEWLI) and 136 to 156 (ILTFLPYYSTPVFLNLLAILP). An HEAT 1 repeat occupies 581–619 (DVDVQALLPFMLIALADPSERVRSGAVDALANIGKVVDK). 2 helical membrane passes run 939 to 959 (IQSGMSYLLSLTLGSLLAIVN) and 995 to 1015 (ALLLVAGLSVIAPELVLHSVM). HEAT repeat units follow at residues 1038-1076 (DQTIDQVVPALIQSLRHQKRDVVSGTSELLLSFTAAFEH), 1110-1148 (YSMDKAVLVLMTGLVSDADATVELSTYSKFLNLVGDSLK), 1244-1282 (TLTTIDFLDTIEALLKRPDDALRRKVLSLLATRLQQSPE), 1288-1327 (QTRMLDFLTVLVDIVQSSPDILLKHAAVTCIDRITEKYGK), and 1756-1794 (LALLPEMLPYISELMEDEDEGVEREVRKWVKQIEGVLGE).

It belongs to the HEATR1/UTP10 family. Component of the ribosomal small subunit (SSU) processome.

It localises to the nucleus. The protein resides in the nucleolus. The protein localises to the membrane. Its function is as follows. Involved in nucleolar processing of pre-18S ribosomal RNA. Involved in ribosome biosynthesis. The polypeptide is U3 small nucleolar RNA-associated protein 10 (Emericella nidulans (strain FGSC A4 / ATCC 38163 / CBS 112.46 / NRRL 194 / M139) (Aspergillus nidulans)).